The chain runs to 714 residues: Kinesin-like protein KIN-13 (714 aa).

An SAM domain is found at 1–63 (MSDLVYQWLE…FRLITTLKSR (63 aa)). Residues 69 to 81 (QQPSAPNTGATPQ) are compositionally biased toward polar residues. 2 disordered regions span residues 69-109 (QQPS…NDIQ) and 122-161 (GGYEPPYVSAQGSGPANGDDYVIPTIPYHPNAPNPPNPRG). Residues 82–92 (SVPSSHVSPHV) are compositionally biased toward low complexity. A compositionally biased stretch (pro residues) spans 151–160 (PNAPNPPNPR). The 333-residue stretch at 183 to 515 (RIRVVIRKRP…LRYADRVKEL (333 aa)) folds into the Kinesin motor domain. 273–280 (GQTGSGKS) contacts ATP.

It belongs to the TRAFAC class myosin-kinesin ATPase superfamily. Kinesin family. KIN-13 subfamily. As to quaternary structure, interacts with PLK. In terms of processing, phosphorylated by PLK.

It is found in the cytoplasm. It localises to the cytoskeleton. The protein resides in the cell projection. Its subcellular location is the cilium. The protein localises to the flagellum. It is found in the flagellum basal body. It localises to the flagellum axoneme. The protein resides in the spindle. Its subcellular location is the chromosome. The protein localises to the centromere. It is found in the kinetochore. Involved in cell cycle. Involved in formation of flagella, regulation of flagellar length, and formation of median bodies during interphase. Regulates flagellar length in all eight distal flagellar tips by promoting disassembly of the microtubules. Disassembles microtubules at the distal flagellar tips in a length-dependent manner in order to maintain different equilibrium lengths of the four flagellar pairs. Regulates interphase and mitotic microtubule dynamics. Regulates microtubule disassembly dynamics of the dual mitotic spindles and the median body. This chain is Kinesin-like protein KIN-13, found in Giardia intestinalis (strain ATCC 50803 / WB clone C6) (Giardia lamblia).